Consider the following 429-residue polypeptide: Enolase (429 aa).

Position 162 (Q162) interacts with (2R)-2-phosphoglycerate. Catalysis depends on E204, which acts as the Proton donor. The Mg(2+) site is built by D241, E288, and D315. The (2R)-2-phosphoglycerate site is built by K340, R369, S370, and K391. Catalysis depends on K340, which acts as the Proton acceptor.

This sequence belongs to the enolase family. The cofactor is Mg(2+).

The protein resides in the cytoplasm. It localises to the secreted. The protein localises to the cell surface. The enzyme catalyses (2R)-2-phosphoglycerate = phosphoenolpyruvate + H2O. The protein operates within carbohydrate degradation; glycolysis; pyruvate from D-glyceraldehyde 3-phosphate: step 4/5. In terms of biological role, catalyzes the reversible conversion of 2-phosphoglycerate (2-PG) into phosphoenolpyruvate (PEP). It is essential for the degradation of carbohydrates via glycolysis. The polypeptide is Enolase (Bacteroides fragilis (strain ATCC 25285 / DSM 2151 / CCUG 4856 / JCM 11019 / LMG 10263 / NCTC 9343 / Onslow / VPI 2553 / EN-2)).